Reading from the N-terminus, the 434-residue chain is Tryptophan synthase beta chain 2 (434 aa).

Lys-110 is subject to N6-(pyridoxal phosphate)lysine.

It belongs to the TrpB family. Tetramer of two alpha and two beta chains. The cofactor is pyridoxal 5'-phosphate.

It carries out the reaction (1S,2R)-1-C-(indol-3-yl)glycerol 3-phosphate + L-serine = D-glyceraldehyde 3-phosphate + L-tryptophan + H2O. It functions in the pathway amino-acid biosynthesis; L-tryptophan biosynthesis; L-tryptophan from chorismate: step 5/5. The beta subunit is responsible for the synthesis of L-tryptophan from indole and L-serine. This chain is Tryptophan synthase beta chain 2 (trpB2), found in Aquifex aeolicus (strain VF5).